A 238-amino-acid polypeptide reads, in one-letter code: tRNA (guanine-N(7)-)-methyltransferase (238 aa).

S-adenosyl-L-methionine is bound by residues Glu-68, Glu-93, Asp-121, and Asp-143. Asp-143 is a catalytic residue. Residues Lys-147, Asp-179, and 216–219 each bind substrate; that span reads TRYE.

It belongs to the class I-like SAM-binding methyltransferase superfamily. TrmB family.

The enzyme catalyses guanosine(46) in tRNA + S-adenosyl-L-methionine = N(7)-methylguanosine(46) in tRNA + S-adenosyl-L-homocysteine. It functions in the pathway tRNA modification; N(7)-methylguanine-tRNA biosynthesis. In terms of biological role, catalyzes the formation of N(7)-methylguanine at position 46 (m7G46) in tRNA. This chain is tRNA (guanine-N(7)-)-methyltransferase, found in Paramagnetospirillum magneticum (strain ATCC 700264 / AMB-1) (Magnetospirillum magneticum).